The chain runs to 393 residues: 8-amino-7-oxononanoate synthase (393 aa).

Pyridoxal 5'-phosphate is bound at residue 107–108 (GF). H132 is a binding site for substrate. Pyridoxal 5'-phosphate contacts are provided by residues S180, 205–208 (DDAH), and 236–239 (TLSK). K239 carries the N6-(pyridoxal phosphate)lysine modification. T353 provides a ligand contact to substrate.

Belongs to the class-II pyridoxal-phosphate-dependent aminotransferase family. BioF subfamily. As to quaternary structure, homodimer. Pyridoxal 5'-phosphate is required as a cofactor.

It carries out the reaction 6-carboxyhexanoyl-[ACP] + L-alanine + H(+) = (8S)-8-amino-7-oxononanoate + holo-[ACP] + CO2. The protein operates within cofactor biosynthesis; biotin biosynthesis. Functionally, catalyzes the decarboxylative condensation of pimeloyl-[acyl-carrier protein] and L-alanine to produce 8-amino-7-oxononanoate (AON), [acyl-carrier protein], and carbon dioxide. This is 8-amino-7-oxononanoate synthase from Coprothermobacter proteolyticus (strain ATCC 35245 / DSM 5265 / OCM 4 / BT).